The sequence spans 236 residues: CD81 antigen (236 aa).

The Cytoplasmic portion of the chain corresponds to 1–12 (MGVEGCTKCIKY). Residues 13-33 (LLFVFNFVFWLAGGVILGVAL) traverse the membrane as a helical segment. At 34-63 (WLRHDPQTTNLLYLELGDRPAPNTFYVGIY) the chain is on the extracellular side. A helical transmembrane segment spans residues 64–84 (ILIAVGAVMMFVGFLGCYGAI). Topologically, residues 85–89 (QESQC) are cytoplasmic. A helical transmembrane segment spans residues 90–112 (LLGTFFTCLVILFACEVAAGIWG). At 113–201 (FVNKDQIAKD…GKIDELFSGK (89 aa)) the chain is on the extracellular side. Cystine bridges form between cysteine 156–cysteine 190 and cysteine 157–cysteine 175. The helical transmembrane segment at 202-224 (LYLIGIAAIVVAVIMIFEMILSM) threads the bilayer. Glutamate 219 lines the cholesterol pocket. Residues 225–236 (VLCCGIRNSSVY) are Cytoplasmic-facing.

The protein belongs to the tetraspanin (TM4SF) family. As to quaternary structure, homodimer. Part of a complex composed of CD19, CR2/CD21, CD81 and IFITM1/CD225 in the membrane of mature B cells. Interacts (via the second extracellular domain) with CD19; this interaction is initiated early during biosynthesis in the ER and enables trafficking of only properly folded CD19. Part of a complex that includes MHC class II/HLA-DR molecules and IFITM1. Interacts with IFITM1. Interacts with IFITM2 and IFITM3. Part of integrin-tetraspanin complex composed of CD9, CD81, beta-1 and beta-2 integrins in the membrane of monocyte/macrophages. Interacts (via the second extracellular domain) with integrin ITGAV:ITGB3. Interacts with CD247/CD3 zeta, ICAM1 and CD9 at the immune synapse on T cell membrane. Part of a GPCR-tetraspanin complex consisting at least of ADGRG1, CD81, possibly CD9, and GNA11 in which CD81 enhances the association of ADGRG1 with GNA11. Part of a complex composed of CD9, CD81, PTGFRN and IGSF8. Interacts directly with IGSF8. Interacts with CD53 and SCIMP. Interacts with SAMHD1 (via its C-terminus). Interacts with glypican GPC3 and with the transcriptional repressor HHEX; binding to GPC3 decreases the availability of free CD81 for binding to HHEX, resulting in nuclear translocation of HHEX and transcriptional repression. Interacts with CLDN1. Interacts with CLDN6 and CLDN9. Not glycosylated. Post-translationally, likely constitutively palmitoylated at low levels. Protein palmitoylation is up-regulated upon coligation of BCR and CD9-C2R-CD81 complexes in lipid rafts.

It localises to the cell membrane. It is found in the basolateral cell membrane. Structural component of specialized membrane microdomains known as tetraspanin-enriched microdomains (TERMs), which act as platforms for receptor clustering and signaling. Essential for trafficking and compartmentalization of CD19 receptor on the surface of activated B cells. Upon initial encounter with microbial pathogens, enables the assembly of CD19-CR2/CD21 and B cell receptor (BCR) complexes at signaling TERMs, lowering the threshold dose of antigen required to trigger B cell clonal expansion and antibody production. In T cells, facilitates the localization of CD247/CD3 zeta at antigen-induced synapses with B cells, providing for costimulation and polarization toward T helper type 2 phenotype. Present in MHC class II compartments, may also play a role in antigen presentation. Can act both as positive and negative regulator of homotypic or heterotypic cell-cell fusion processes. Positively regulates sperm-egg fusion and may be involved in acrosome reaction. In myoblasts, associates with CD9 and PTGFRN and inhibits myotube fusion during muscle regeneration. In macrophages, associates with CD9 and beta-1 and beta-2 integrins, and prevents macrophage fusion into multinucleated giant cells specialized in ingesting complement-opsonized large particles. Also prevents the fusion of mononuclear cell progenitors into osteoclasts in charge of bone resorption. May regulate the compartmentalization of enzymatic activities. In T cells, defines the subcellular localization of dNTPase SAMHD1 and permits its degradation by the proteasome, thereby controlling intracellular dNTP levels. Also involved in cell adhesion and motility. Positively regulates integrin-mediated adhesion of macrophages, particularly relevant for the inflammatory response in the lung. This is CD81 antigen (CD81) from Bos taurus (Bovine).